Here is a 210-residue protein sequence, read N- to C-terminus: Redox-sensing transcriptional repressor Rex (210 aa).

The segment at residues 16–55 (VYSRHLTDVDRKGIVTISSGDIAEGVGVSPAQVRKDLAYF) is a DNA-binding region (H-T-H motif). An NAD(+)-binding site is contributed by 90 to 95 (GMGNLG).

Belongs to the transcriptional regulatory Rex family. In terms of assembly, homodimer.

It localises to the cytoplasm. Its function is as follows. Modulates transcription in response to changes in cellular NADH/NAD(+) redox state. This Desulfitobacterium hafniense (strain DSM 10664 / DCB-2) protein is Redox-sensing transcriptional repressor Rex.